The primary structure comprises 335 residues: Holliday junction branch migration complex subunit RuvB (335 aa).

Residues M1 to Y183 are large ATPase domain (RuvB-L). ATP contacts are provided by residues L22, R23, G64, K67, T68, T69, E130–Y132, R173, Y183, and R220. Mg(2+) is bound at residue T68. A small ATPAse domain (RuvB-S) region spans residues T184–Q254. The tract at residues P257–V335 is head domain (RuvB-H). DNA-binding residues include R293, R312, and R317.

The protein belongs to the RuvB family. Homohexamer. Forms an RuvA(8)-RuvB(12)-Holliday junction (HJ) complex. HJ DNA is sandwiched between 2 RuvA tetramers; dsDNA enters through RuvA and exits via RuvB. An RuvB hexamer assembles on each DNA strand where it exits the tetramer. Each RuvB hexamer is contacted by two RuvA subunits (via domain III) on 2 adjacent RuvB subunits; this complex drives branch migration. In the full resolvosome a probable DNA-RuvA(4)-RuvB(12)-RuvC(2) complex forms which resolves the HJ.

The protein resides in the cytoplasm. The enzyme catalyses ATP + H2O = ADP + phosphate + H(+). Its function is as follows. The RuvA-RuvB-RuvC complex processes Holliday junction (HJ) DNA during genetic recombination and DNA repair, while the RuvA-RuvB complex plays an important role in the rescue of blocked DNA replication forks via replication fork reversal (RFR). RuvA specifically binds to HJ cruciform DNA, conferring on it an open structure. The RuvB hexamer acts as an ATP-dependent pump, pulling dsDNA into and through the RuvAB complex. RuvB forms 2 homohexamers on either side of HJ DNA bound by 1 or 2 RuvA tetramers; 4 subunits per hexamer contact DNA at a time. Coordinated motions by a converter formed by DNA-disengaged RuvB subunits stimulates ATP hydrolysis and nucleotide exchange. Immobilization of the converter enables RuvB to convert the ATP-contained energy into a lever motion, pulling 2 nucleotides of DNA out of the RuvA tetramer per ATP hydrolyzed, thus driving DNA branch migration. The RuvB motors rotate together with the DNA substrate, which together with the progressing nucleotide cycle form the mechanistic basis for DNA recombination by continuous HJ branch migration. Branch migration allows RuvC to scan DNA until it finds its consensus sequence, where it cleaves and resolves cruciform DNA. In Listeria welshimeri serovar 6b (strain ATCC 35897 / DSM 20650 / CCUG 15529 / CIP 8149 / NCTC 11857 / SLCC 5334 / V8), this protein is Holliday junction branch migration complex subunit RuvB.